We begin with the raw amino-acid sequence, 501 residues long: ATP synthase subunit alpha (501 aa).

169 to 176 (GDRQTGKT) provides a ligand contact to ATP.

This sequence belongs to the ATPase alpha/beta chains family. As to quaternary structure, F-type ATPases have 2 components, CF(1) - the catalytic core - and CF(0) - the membrane proton channel. CF(1) has five subunits: alpha(3), beta(3), gamma(1), delta(1), epsilon(1). CF(0) has three main subunits: a(1), b(2) and c(9-12). The alpha and beta chains form an alternating ring which encloses part of the gamma chain. CF(1) is attached to CF(0) by a central stalk formed by the gamma and epsilon chains, while a peripheral stalk is formed by the delta and b chains.

The protein resides in the cell membrane. It carries out the reaction ATP + H2O + 4 H(+)(in) = ADP + phosphate + 5 H(+)(out). In terms of biological role, produces ATP from ADP in the presence of a proton gradient across the membrane. The alpha chain is a regulatory subunit. The protein is ATP synthase subunit alpha of Streptococcus pyogenes serotype M2 (strain MGAS10270).